The primary structure comprises 750 residues: MIIRSPEPEVKIVVDRDPVKTSFEEWARPGHFSRTLAKGPDTTTWIWNLHADAHDFDSHTGDLEEISRKVFSAHFGQLSIIFLWLSGMYFHGARFSNYEAWLSDPTHIGPSAQVVWPIVGQEILNGDVGGGFRGIQITSGFFQLWRASGITSELQLYCTAIGALVFAALMLFAGWFHYHKAAPKLAWFQDVESMLNHHLAGLLGLGSLSWAGHQIHVSLPINQFLDAGVDPKEIPLPHEFILNRDLLAQLYPSFAEGATPFFTLNWSKYAEFLTFRGGLDPVTGGLWLTDIAHHHLAIAILFLIAGHMYRTNWGIGHGLKDILEAHKGPFTGQGHKGLYEILTTSWHAQLSLNLAMLGSTTIVVAHHMYSMPPYPYLATDYGTQLSLFTHHMWIGGFLIVGAAAHAAIFMVRDYDPTTRYNDLLDRVLRHRDAIISHLNWVCIFLGFHSFGLYIHNDTMSALGRPQDMFSDTAIQLQPIFAQWVQNIHATAPGVTAPGATTSTSLTWGGGELVAVGGKVALLPIPLGTADFLVHHIHAFTIHVTVLILLKGVLFARSSRLIPDKANLGFRFPCDGPGRGGTCQVSAWDHVFLGLFWMYNAISVVIFHFSWKMQSDVWGTISDQGVVTHITGGNFAQSSITINGWLRDFLWAQASQVIQSYGSSLSAYGLFFLGAHFVWAFSLMFLFSGRGYWQELIESIVWAHNKLKVAPATQPRALSIIQGRAVGVTHYLLGGIATTWAFFLARIIAVG.

8 helical membrane-spanning segments follow: residues 70-93 (VFSAHFGQLSIIFLWLSGMYFHGA), 156-179 (LYCTAIGALVFAALMLFAGWFHYH), 195-219 (LNHHLAGLLGLGSLSWAGHQIHVSL), 291-309 (IAHHHLAIAILFLIAGHMY), 346-369 (WHAQLSLNLAMLGSTTIVVAHHMY), 385-411 (LSLFTHHMWIGGFLIVGAAAHAAIFMV), 433-455 (AIISHLNWVCIFLGFHSFGLYIH), and 531-549 (FLVHHIHAFTIHVTVLILL). Residues Cys-573 and Cys-582 each contribute to the [4Fe-4S] cluster site. Helical transmembrane passes span 589-610 (HVFLGLFWMYNAISVVIFHFSW) and 664-686 (LSAYGLFFLGAHFVWAFSLMFLF). His-675 is a chlorophyll a' binding site. Chlorophyll a-binding residues include Met-683 and Tyr-691. Trp-692 contacts phylloquinone. A helical membrane pass occupies residues 724 to 744 (AVGVTHYLLGGIATTWAFFLA).

Belongs to the PsaA/PsaB family. The PsaA/B heterodimer binds the P700 chlorophyll special pair and subsequent electron acceptors. PSI consists of a core antenna complex that captures photons, and an electron transfer chain that converts photonic excitation into a charge separation. The eukaryotic PSI reaction center is composed of at least 11 subunits. Requires P700 is a chlorophyll a/chlorophyll a' dimer, A0 is one or more chlorophyll a, A1 is one or both phylloquinones and FX is a shared 4Fe-4S iron-sulfur center. as cofactor.

It localises to the plastid. The protein localises to the chloroplast thylakoid membrane. It catalyses the reaction reduced [plastocyanin] + hnu + oxidized [2Fe-2S]-[ferredoxin] = oxidized [plastocyanin] + reduced [2Fe-2S]-[ferredoxin]. PsaA and PsaB bind P700, the primary electron donor of photosystem I (PSI), as well as the electron acceptors A0, A1 and FX. PSI is a plastocyanin-ferredoxin oxidoreductase, converting photonic excitation into a charge separation, which transfers an electron from the donor P700 chlorophyll pair to the spectroscopically characterized acceptors A0, A1, FX, FA and FB in turn. Oxidized P700 is reduced on the lumenal side of the thylakoid membrane by plastocyanin. This is Photosystem I P700 chlorophyll a apoprotein A1 from Hordeum vulgare (Barley).